The chain runs to 120 residues: Large ribosomal subunit protein uL18 (120 aa).

The protein belongs to the universal ribosomal protein uL18 family. In terms of assembly, part of the 50S ribosomal subunit; part of the 5S rRNA/L5/L18/L25 subcomplex. Contacts the 5S and 23S rRNAs.

Its function is as follows. This is one of the proteins that bind and probably mediate the attachment of the 5S RNA into the large ribosomal subunit, where it forms part of the central protuberance. In Beijerinckia indica subsp. indica (strain ATCC 9039 / DSM 1715 / NCIMB 8712), this protein is Large ribosomal subunit protein uL18.